The primary structure comprises 110 residues: MSRAIIKFIRLSPTKARLIADEVQGMNAELALASLSFMPNRGAKYIASAISSAVANGGFEPEEVVVKSCRVDAGPVLKRFRPRARGSASRIRKPTSHILVEVSKPESKEA.

Belongs to the universal ribosomal protein uL22 family. As to quaternary structure, part of the 50S ribosomal subunit.

In terms of biological role, this protein binds specifically to 23S rRNA; its binding is stimulated by other ribosomal proteins, e.g. L4, L17, and L20. It is important during the early stages of 50S assembly. It makes multiple contacts with different domains of the 23S rRNA in the assembled 50S subunit and ribosome. The globular domain of the protein is located near the polypeptide exit tunnel on the outside of the subunit, while an extended beta-hairpin is found that lines the wall of the exit tunnel in the center of the 70S ribosome. The sequence is that of Large ribosomal subunit protein uL22 from Campylobacter fetus subsp. fetus (strain 82-40).